A 231-amino-acid chain; its full sequence is MSTTVETARSSVIVAIDGPSGTGKSSTSKAVAAKLGLSYLDTGAQYRAITWWMLTNGVDVGNPEEIATAAAKPVIVSGTDPAAPTITVDGEDASGPIRTQEVTSKVSAVSAVPEVRTLITALQRSIAAAATGGIVVEGRDIGTTVLPDADLKIFLTASPEARAARRSGEVKGSDLSATREALIKRDAADSGRKTSPLAKADDAVEVDTTELTLQQVIECVVTLVEGKRVAA.

Residue 18–26 (GPSGTGKSS) participates in ATP binding.

This sequence belongs to the cytidylate kinase family. Type 1 subfamily.

The protein localises to the cytoplasm. The catalysed reaction is CMP + ATP = CDP + ADP. It carries out the reaction dCMP + ATP = dCDP + ADP. This is Cytidylate kinase from Streptomyces griseus subsp. griseus (strain JCM 4626 / CBS 651.72 / NBRC 13350 / KCC S-0626 / ISP 5235).